The sequence spans 224 residues: Pyridoxine/pyridoxamine 5'-phosphate oxidase (224 aa).

FMN is bound by residues 69-74 (RHVLLK), 83-84 (FT), Arg89, Lys90, and Gln112. Residue Lys74 coordinates substrate. 3 residues coordinate substrate: Tyr130, Arg134, and Ser138. Residues 148-149 (QS) and Trp194 contribute to the FMN site. 200–202 (RMH) is a binding site for substrate. Arg204 provides a ligand contact to FMN.

Belongs to the pyridoxamine 5'-phosphate oxidase family. Homodimer. FMN is required as a cofactor.

The catalysed reaction is pyridoxamine 5'-phosphate + O2 + H2O = pyridoxal 5'-phosphate + H2O2 + NH4(+). The enzyme catalyses pyridoxine 5'-phosphate + O2 = pyridoxal 5'-phosphate + H2O2. It functions in the pathway cofactor metabolism; pyridoxal 5'-phosphate salvage; pyridoxal 5'-phosphate from pyridoxamine 5'-phosphate: step 1/1. Its pathway is cofactor metabolism; pyridoxal 5'-phosphate salvage; pyridoxal 5'-phosphate from pyridoxine 5'-phosphate: step 1/1. Catalyzes the oxidation of either pyridoxine 5'-phosphate (PNP) or pyridoxamine 5'-phosphate (PMP) into pyridoxal 5'-phosphate (PLP). The chain is Pyridoxine/pyridoxamine 5'-phosphate oxidase from Acidothermus cellulolyticus (strain ATCC 43068 / DSM 8971 / 11B).